We begin with the raw amino-acid sequence, 243 residues long: DNA repair protein RecO (243 aa).

This sequence belongs to the RecO family.

Functionally, involved in DNA repair and RecF pathway recombination. This is DNA repair protein RecO from Frankia casuarinae (strain DSM 45818 / CECT 9043 / HFP020203 / CcI3).